We begin with the raw amino-acid sequence, 166 residues long: Protein-export protein SecB (166 aa).

This sequence belongs to the SecB family. Homotetramer, a dimer of dimers. One homotetramer interacts with 1 SecA dimer.

The protein localises to the cytoplasm. One of the proteins required for the normal export of preproteins out of the cell cytoplasm. It is a molecular chaperone that binds to a subset of precursor proteins, maintaining them in a translocation-competent state. It also specifically binds to its receptor SecA. The protein is Protein-export protein SecB of Roseobacter denitrificans (strain ATCC 33942 / OCh 114) (Erythrobacter sp. (strain OCh 114)).